Consider the following 261-residue polypeptide: Indole-3-glycerol phosphate synthase (261 aa).

This sequence belongs to the TrpC family.

The enzyme catalyses 1-(2-carboxyphenylamino)-1-deoxy-D-ribulose 5-phosphate + H(+) = (1S,2R)-1-C-(indol-3-yl)glycerol 3-phosphate + CO2 + H2O. It participates in amino-acid biosynthesis; L-tryptophan biosynthesis; L-tryptophan from chorismate: step 4/5. The sequence is that of Indole-3-glycerol phosphate synthase from Paraburkholderia phymatum (strain DSM 17167 / CIP 108236 / LMG 21445 / STM815) (Burkholderia phymatum).